A 144-amino-acid polypeptide reads, in one-letter code: Glycine-rich protein DC9.1 (144 aa).

The chain crosses the membrane as a helical span at residues 5-25 (IFLLLGLSIAFAILISSEVAA). A run of 11 repeats spans residues 37-42 (GYNNGG), 43-48 (GYHNGG), 50-55 (GYNNGG), 56-61 (GYHNGG), 63-68 (GYNNGG), 69-74 (GYHNGG), 76-81 (GYNNGG), 82-87 (GYHNGG), 89-94 (GYNNGG), 102-107 (GYNNGG), and 108-113 (GHHGGG). The segment at 37-113 (GYNNGGGYHN…NNGGGHHGGG (77 aa)) is 11 X 6 AA tandem repeats of G-Y-[NH]-N-G -G.

It belongs to the GRP family.

The protein localises to the membrane. The polypeptide is Glycine-rich protein DC9.1 (Daucus carota (Wild carrot)).